Here is a 353-residue protein sequence, read N- to C-terminus: 41 kDa protein (353 aa).

The tract at residues 132–197 (QSSHASALEQ…DNNSSDTIKD (66 aa)) is disordered. The segment covering 157–169 (LDNKGKSDSENCN) has biased composition (basic and acidic residues).

The protein is 41 kDa protein of Lactobacillus helveticus (Lactobacillus suntoryeus).